We begin with the raw amino-acid sequence, 573 residues long: Proton-coupled zinc antiporter SLC30A9, mitochondrial (573 aa).

A disordered region spans residues 66–108; it reads NCSTSGSGKDGSPTRPEEPKTTEKAQAAQPAAKGAGSKPQGLT. The segment covering 90 to 104 has biased composition (low complexity); that stretch reads AQAAQPAAKGAGSKP. 5 helical membrane passes run 244–264, 319–339, 347–367, 397–417, and 429–449; these read VVMV…LAWV, GVGI…MGLL, LLWA…TLLV, VVLL…GCMG, and SLGS…LIYT. The short motif at 467–471 is the LXXLL motif element; it reads LTEFL.

It belongs to the cation diffusion facilitator (CDF) transporter (TC 2.A.4) family. SLC30A subfamily.

The protein resides in the mitochondrion membrane. Its subcellular location is the nucleus. The protein localises to the endoplasmic reticulum. It carries out the reaction Zn(2+)(in) + 2 H(+)(out) = Zn(2+)(out) + 2 H(+)(in). Mitochondrial proton-coupled zinc ion antiporter mediating the export of zinc from the mitochondria and involved in zinc homeostasis, zinc mobilization as well as mitochondrial morphology and health. In nucleus, may function as a secondary coactivator for nuclear receptors. This chain is Proton-coupled zinc antiporter SLC30A9, mitochondrial (slc30a9), found in Danio rerio (Zebrafish).